The following is an 84-amino-acid chain: Cell division topological specificity factor (84 aa).

This sequence belongs to the MinE family.

Prevents the cell division inhibition by proteins MinC and MinD at internal division sites while permitting inhibition at polar sites. This ensures cell division at the proper site by restricting the formation of a division septum at the midpoint of the long axis of the cell. The polypeptide is Cell division topological specificity factor (Paraburkholderia xenovorans (strain LB400)).